A 533-amino-acid chain; its full sequence is Cytochrome P450 monooxygenase calL (533 aa).

The chain crosses the membrane as a helical span at residues 8–28 (TQLALLVWGIAVCVTLAIVVP). N-linked (GlcNAc...) asparagine glycosylation is present at N33. Residues 123-148 (GKFKQDQSGRSKNPVPGHDVKPGQPR) are disordered. A glycan (N-linked (GlcNAc...) asparagine) is linked at N388. Residue C467 coordinates heme.

It belongs to the cytochrome P450 family. Requires heme as cofactor.

It is found in the membrane. It functions in the pathway secondary metabolite biosynthesis. Its function is as follows. Cytochrome P450 monooxygenase; part of the gene cluster that mediates the biosynthesis of calbistrin A and related compounds. Calbistrin A is a secondary metabolite with an interesting structure that was recently found to have bioactivity against leukemia cells. It consists of two polyketides linked by an ester bond: a bicyclic decalin containing polyketide and a linear 12 carbon dioic acid structure. The polyketide synthase calA is probably responsible for forming the decalin moiety. Because calA lacks a designated enoylreductase (ER) domain, the required activity is provided by the trans-enoyl reductase calK. Following release from the PKS, calF then probably catalyzes the oxidation and the subsequent Diels Alder cycloisomerization that lead to the formation of the decalin moiety. The decalin polyketide backbone includes two C-methyl groups, at C7 and C11 in backbone, of which the C7 position is probably methylated by the methyltransferase domain of calA. A candidate for adding the methyl group at C11, if not done by CalA, is the cluster methyltransferase calH. Several additional tailoring enzymes within the cluster could be involved in the modification of the decalin polyketide product. Those include the 3 cytochrome P450 monooxygenases CalE, CalG and CalL, of which one might be responsible for the introduction of the extra hydroxyl group attached to the backbone of the decalin moiety, at position C9 in the backbone, that allows for attachment of the linear moiety. One tailoring enzyme activity that is expected to be involved in biosynthesis of calbistrin is an acyltransferase for connecting the two polyketide synthase products, and which could be performed by the cluster acyltransferase calJ. The enzyme responsible for the biosynthesis of the linear moiety, probably a second PKS, has not been identified yet. The sequence is that of Cytochrome P450 monooxygenase calL from Penicillium decumbens.